Consider the following 187-residue polypeptide: GTP cyclohydrolase 1 (187 aa).

Zn(2+)-binding residues include Cys-76, His-79, and Cys-148.

Belongs to the GTP cyclohydrolase I family. In terms of assembly, toroid-shaped homodecamer, composed of two pentamers of five dimers.

It carries out the reaction GTP + H2O = 7,8-dihydroneopterin 3'-triphosphate + formate + H(+). Its pathway is cofactor biosynthesis; 7,8-dihydroneopterin triphosphate biosynthesis; 7,8-dihydroneopterin triphosphate from GTP: step 1/1. The sequence is that of GTP cyclohydrolase 1 from Streptococcus agalactiae serotype Ia (strain ATCC 27591 / A909 / CDC SS700).